A 325-amino-acid polypeptide reads, in one-letter code: 6-hydroxymellein 5-farnesyltransferase cdmH (325 aa).

5 helical membrane-spanning segments follow: residues 60–80, 113–133, 138–158, 169–189, and 192–212; these read ASILRLAGLCTAHCVLLGAAG, AFTWMAFLYSTSVGMLKAMLG, WPFMVPLTAIILVYPLGKRPI, LLGIAVGYPTMYGWAAVYGPC, and ISEILHRCVPLWIFLFFWSFY. An N-linked (GlcNAc...) asparagine glycan is attached at asparagine 214. 3 helical membrane-spanning segments follow: residues 243–263, 267–287, and 295–315; these read ALLAILASIALSTIPFVLRPF, WLWLSWVGAWVPGIIQQLLSF, and GGVLHLSTVKLGLWTVFACTL.

Belongs to the UbiA prenyltransferase family. Mg(2+) is required as a cofactor.

The protein localises to the membrane. The enzyme catalyses 6-hydroxymellein + (2E,6E)-farnesyl diphosphate = verruculide C + diphosphate. Its pathway is secondary metabolite biosynthesis; terpenoid biosynthesis. Its function is as follows. 6-hydroxymellein 5-farnesyltransferase; part of the gene cluster that mediates the biosynthesis of chrodrimanin B, a meroterpenoid that acts as a potent blocker of insect GABA-gated chloride channels. The first step of the pathway is the biosynthesis of 6-hydroxymellein by the polyketide synthase cdmE. The prenyltransferase cdmH acts as a 6-hydroxymellein 5-farnesyltransferase and produces the hydrophobic metabolite verruculide C. The FAD-dependent monooxygenase cdmI further converts verruculide C into verruculide B. The terpene cyclase cdmG then produced the pentacyclic molecule 3-hydroxypentacecilide A, the backbone structure of chrodrimanin B, via folding the farnesyl moiety of the substrate into the chair-boat conformation. The short-chain dehydrogenase/reductase cdmF functions as the 3-OH dehydrogenase that oxidizes the C-3 hydroxyl group of 3-hydroxypentacecilide A and produces chrodrimanin C, the dehydrogenated product of 3-hydroxypentacecilide A. The cytochrome P450 monooxygenase cdmJ then accepts both 3-hydroxypentacecilide A and chrodrimanin C and functions as a C-7-beta-hydroxylase to produce respectively chrodrimanin H and chrodrimanin F. The dioxygenase cdmA accepts chrodrimanin H to afford chrodrimanin E, which is further transformed to chrodrimanin A by the dioxygenase cdmD. CdmA can also accept chrodrimanin C as substrate to convert it into verruculide A, which is further converted into chrodrimanin T by cdmD. The last step of the biosynthesis is proposed to be performed by the acetyltransferase cdmC which acetylates chrodrimanin A to yield chrodrimanin B. The pathway may also lead to the production of additional shunt products, including chrodrimanins T and U. The sequence is that of 6-hydroxymellein 5-farnesyltransferase cdmH from Talaromyces verruculosus (Penicillium verruculosum).